A 219-amino-acid chain; its full sequence is Ribosomal RNA large subunit methyltransferase E (219 aa).

S-adenosyl-L-methionine contacts are provided by glycine 60, tryptophan 62, aspartate 80, aspartate 96, and aspartate 120. Lysine 160 acts as the Proton acceptor in catalysis.

Belongs to the class I-like SAM-binding methyltransferase superfamily. RNA methyltransferase RlmE family.

It is found in the cytoplasm. It catalyses the reaction uridine(2552) in 23S rRNA + S-adenosyl-L-methionine = 2'-O-methyluridine(2552) in 23S rRNA + S-adenosyl-L-homocysteine + H(+). Specifically methylates the uridine in position 2552 of 23S rRNA at the 2'-O position of the ribose in the fully assembled 50S ribosomal subunit. The protein is Ribosomal RNA large subunit methyltransferase E of Acidithiobacillus ferrooxidans (strain ATCC 23270 / DSM 14882 / CIP 104768 / NCIMB 8455) (Ferrobacillus ferrooxidans (strain ATCC 23270)).